A 442-amino-acid chain; its full sequence is D-inositol 3-phosphate glycosyltransferase (442 aa).

His26 provides a ligand contact to 1D-myo-inositol 3-phosphate. Residues 32–33 and Gly40 each bind UDP-N-acetyl-alpha-D-glucosamine; that span reads QP. 1D-myo-inositol 3-phosphate-binding positions include 37-42, Lys95, Tyr128, Thr152, and Arg172; that span reads DAGGMN. 3 residues coordinate UDP-N-acetyl-alpha-D-glucosamine: Arg246, Lys251, and Gln304. The Mg(2+) site is built by Tyr313, Arg314, and Ala316. Residues Glu326 and Glu334 each coordinate UDP-N-acetyl-alpha-D-glucosamine. A Mg(2+)-binding site is contributed by Thr340.

This sequence belongs to the glycosyltransferase group 1 family. MshA subfamily. As to quaternary structure, homodimer.

The enzyme catalyses 1D-myo-inositol 3-phosphate + UDP-N-acetyl-alpha-D-glucosamine = 1D-myo-inositol 2-acetamido-2-deoxy-alpha-D-glucopyranoside 3-phosphate + UDP + H(+). Catalyzes the transfer of a N-acetyl-glucosamine moiety to 1D-myo-inositol 3-phosphate to produce 1D-myo-inositol 2-acetamido-2-deoxy-glucopyranoside 3-phosphate in the mycothiol biosynthesis pathway. The sequence is that of D-inositol 3-phosphate glycosyltransferase from Mycolicibacterium gilvum (strain PYR-GCK) (Mycobacterium gilvum (strain PYR-GCK)).